A 1492-amino-acid polypeptide reads, in one-letter code: Condensin-2 complex subunit D3-L (1492 aa).

The segment at 152–201 (WPRDPNASRKRKKDTLKSSQGDNRGGRKRPRPPRRDEQEMEDLSEEEQDE) is disordered. The segment covering 189-201 (QEMEDLSEEEQDE) has biased composition (acidic residues). 3 HEAT repeats span residues 543–581 (SSDG…CHLI), 583–619 (CSSE…AQPH), and 621–659 (VLIQ…QSIT). Disordered regions lie at residues 1269–1345 (QLER…PRPR), 1359–1406 (RKAA…SLVG), and 1454–1492 (IMSP…KPSN). Residues 1277–1290 (NVQNPPSAESTGSP) are compositionally biased toward polar residues. Low complexity predominate over residues 1377 to 1388 (PSTPSPARTTSS).

Component of the condensin-2 complex, which contains the smc2 and smc4 heterodimer, and three non SMC subunits, ncapg2, ncaph2 and ncapd3 that probably regulate the complex.

The protein localises to the nucleus. In terms of biological role, regulatory subunit of the condensin-2 complex, a complex which establishes mitotic chromosome architecture and is involved in physical rigidity of the chromatid axis. This Xenopus laevis (African clawed frog) protein is Condensin-2 complex subunit D3-L.